The primary structure comprises 417 residues: Serine hydroxymethyltransferase (417 aa).

Residues L121 and 125 to 127 contribute to the (6S)-5,6,7,8-tetrahydrofolate site; that span reads GHL. Residue K230 is modified to N6-(pyridoxal phosphate)lysine. 355–357 is a binding site for (6S)-5,6,7,8-tetrahydrofolate; sequence SPF.

The protein belongs to the SHMT family. In terms of assembly, homodimer. Requires pyridoxal 5'-phosphate as cofactor.

The protein resides in the cytoplasm. The catalysed reaction is (6R)-5,10-methylene-5,6,7,8-tetrahydrofolate + glycine + H2O = (6S)-5,6,7,8-tetrahydrofolate + L-serine. It participates in one-carbon metabolism; tetrahydrofolate interconversion. It functions in the pathway amino-acid biosynthesis; glycine biosynthesis; glycine from L-serine: step 1/1. In terms of biological role, catalyzes the reversible interconversion of serine and glycine with tetrahydrofolate (THF) serving as the one-carbon carrier. This reaction serves as the major source of one-carbon groups required for the biosynthesis of purines, thymidylate, methionine, and other important biomolecules. Also exhibits THF-independent aldolase activity toward beta-hydroxyamino acids, producing glycine and aldehydes, via a retro-aldol mechanism. The protein is Serine hydroxymethyltransferase of Legionella pneumophila (strain Corby).